Here is a 311-residue protein sequence, read N- to C-terminus: Cbb3-type cytochrome c oxidase subunit CcoP1 (311 aa).

2 consecutive transmembrane segments (helical) span residues 4–24 and 56–76; these read FWSGYIALLTLGTIVALFWLI and RWWFLLFIGTLVFGILYLVLY. Cytochrome c domains are found at residues 130–209 and 220–302; these read QAVK…RKDL and ADLS…YSLS. 8 residues coordinate heme c: Cys-143, Cys-146, His-147, Met-186, Cys-233, Cys-236, His-237, and Met-279.

This sequence belongs to the CcoP / FixP family. In terms of assembly, component of the cbb3-type cytochrome c oxidase at least composed of CcoN, CcoO, CcoQ and CcoP. Requires heme c as cofactor.

The protein resides in the cell inner membrane. It functions in the pathway energy metabolism; oxidative phosphorylation. Functionally, C-type cytochrome. Part of the cbb3-type cytochrome c oxidase complex. CcoP subunit is required for transferring electrons from donor cytochrome c via its heme groups to CcoO subunit. From there, electrons are shuttled to the catalytic binuclear center of CcoN subunit where oxygen reduction takes place. The complex also functions as a proton pump. This Stutzerimonas stutzeri (Pseudomonas stutzeri) protein is Cbb3-type cytochrome c oxidase subunit CcoP1.